Here is a 445-residue protein sequence, read N- to C-terminus: Oxysterols receptor LXR-alpha (445 aa).

2 disordered regions span residues 1 to 34 (MSLWLEAAVPDVSPDSATELWKTEPQDAGDQGGN) and 62 to 86 (TALLPRAETLPEPTELRPQKRKKGP). Positions 1–94 (MSLWLEAAVP…GPAPKMLGNE (94 aa)) are transactivation AF-1; required for ligand-independent transactivation function. The nuclear receptor DNA-binding region spans 93-168 (NELCSVCGDK…AGMREECVLS (76 aa)). 2 consecutive NR C4-type zinc fingers follow at residues 96–116 (CSVCGDKASAFHYNVLSCEGC) and 132–156 (CHSGGHCPMDTYMRRKCQECRLRKC). The segment at 178–200 (KRQEEEQAQATSVSPRVSSPPQV) is disordered. Residues 189–200 (SVSPRVSSPPQV) are compositionally biased toward low complexity. Serine 191 carries the post-translational modification Phosphoserine. The interval 203–445 (QLSPEQLGMI…LLSEIWDVHE (243 aa)) is transactivation AF-2; required for ligand-dependent transactivation function; mediates interaction with CCAR2. An NR LBD domain is found at 207 to 445 (EQLGMIEKLV…LLSEIWDVHE (239 aa)).

It belongs to the nuclear hormone receptor family. NR1 subfamily. In terms of assembly, heterodimer of NR1H3 and RXR (retinoic acid receptor). Interacts with CCAR2 (via N-terminus) in a ligand-independent manner. Interacts with SIRT1 and this interaction is inhibited by CCAR2. Post-translationally, ubiquitinated by UBR5, leading to its degradation: UBR5 specifically recognizes and binds ligand-bound NR1H3 when it is not associated with coactivators (NCOAs). In presence of NCOAs, the UBR5-degron is not accessible, preventing its ubiquitination and degradation. In adults it is expressed in spleen, pituitary, lung, liver, and fat. Weaker expression is observed in several other tissues.

The protein resides in the nucleus. It localises to the cytoplasm. Its function is as follows. Nuclear receptor that exhibits a ligand-dependent transcriptional activation activity. Interaction with retinoic acid receptor (RXR) shifts RXR from its role as a silent DNA-binding partner to an active ligand-binding subunit in mediating retinoid responses through target genes defined by LXRES. LXRES are DR4-type response elements characterized by direct repeats of two similar hexanuclotide half-sites spaced by four nucleotides. Plays an important role in the regulation of cholesterol homeostasis, regulating cholesterol uptake through MYLIP-dependent ubiquitination of LDLR, VLDLR and LRP8. Interplays functionally with RORA for the regulation of genes involved in liver metabolism. Induces LPCAT3-dependent phospholipid remodeling in endoplasmic reticulum (ER) membranes of hepatocytes, driving SREBF1 processing and lipogenesis. Via LPCAT3, triggers the incorporation of arachidonate into phosphatidylcholines of ER membranes, increasing membrane dynamics and enabling triacylglycerols transfer to nascent very low-density lipoprotein (VLDL) particles. Via LPCAT3 also counteracts lipid-induced ER stress response and inflammation, likely by modulating SRC kinase membrane compartmentalization and limiting the synthesis of lipid inflammatory mediators. The protein is Oxysterols receptor LXR-alpha (Nr1h3) of Rattus norvegicus (Rat).